The following is a 123-amino-acid chain: Large ribosomal subunit protein bL19 (123 aa).

This sequence belongs to the bacterial ribosomal protein bL19 family.

Its function is as follows. This protein is located at the 30S-50S ribosomal subunit interface and may play a role in the structure and function of the aminoacyl-tRNA binding site. The sequence is that of Large ribosomal subunit protein bL19 from Ureaplasma urealyticum serovar 10 (strain ATCC 33699 / Western).